Consider the following 176-residue polypeptide: Membrane glycoprotein UL144 (176 aa).

Positions 1–20 (MKPLVMLICFGVILLQLGVT) are cleaved as a signal peptide. One copy of the TNFR-Cys repeat lies at 58–95 (PCPNGTYVSGLYNCTDCTQCNVTQVMIRNCTSTNNTVC). Intrachain disulfides connect Cys-59–Cys-71, Cys-74–Cys-87, and Cys-77–Cys-95. The chain crosses the membrane as a helical span at residues 134–154 (LAWLSLFIFLVGIILLILYLI).

As to quaternary structure, interacts with host TRIM23; this interaction causes auto-ubiquitination of TRAF6, leading to NF-kappaB activation.

The protein localises to the membrane. Activates NF-kappa-B in a tumor necrosis factor receptor (TNFR)-associated factor 6 (TRAF6)-dependent manner, causing the up-regulation of the chemokine CCL22. The polypeptide is Membrane glycoprotein UL144 (UL144) (Human cytomegalovirus (strain Merlin) (HHV-5)).